Here is a 490-residue protein sequence, read N- to C-terminus: Scarecrow-like transcription factor PAT1 (490 aa).

In terms of domain architecture, GRAS spans 110 to 490 (TLEAISRRDL…RDLVASCAWK (381 aa)). Positions 117–178 (RDLRADLVSC…AQLASSGSSI (62 aa)) are leucine repeat I (LRI). Positions 197 to 262 (MHILYEVCPY…GGPPRIRITG (66 aa)) are VHIID. A VHIID motif is present at residues 228-232 (VHIID). The interval 278 to 310 (IVGNRLAKLAKQFNVPFEFNSVSVSVSEVKPKN) is leucine repeat II (LRII). A PFYRE region spans residues 319-413 (LAVNFAFVLH…QHCLARDVVN (95 aa)). Residues 416 to 490 (ACEGADRVER…RDLVASCAWK (75 aa)) form an SAW region.

This sequence belongs to the GRAS family.

It is found in the cytoplasm. In terms of biological role, probable transcription factor involved in phytochrome A (phyA) signal transduction. The protein is Scarecrow-like transcription factor PAT1 (PAT1) of Arabidopsis thaliana (Mouse-ear cress).